Consider the following 293-residue polypeptide: Meteorin (293 aa).

Residues 1-23 form the signal peptide; the sequence is MGFPAAALLCALCCGLLAPAARA. 5 cysteine pairs are disulfide-bonded: Cys30-Cys51, Cys82-Cys118, Cys171-Cys242, Cys174-Cys266, and Cys184-Cys288.

It belongs to the meteorin family. As to quaternary structure, monomer.

The protein localises to the secreted. Functionally, involved in both glial cell differentiation and axonal network formation during neurogenesis. Promotes astrocyte differentiation and transforms cerebellar astrocytes into radial glia. Also induces axonal extension in small and intermediate neurons of sensory ganglia by activating nearby satellite glia. In Homo sapiens (Human), this protein is Meteorin (METRN).